The following is a 984-amino-acid chain: Probable beta-galactosidase C (984 aa).

The N-terminal stretch at methionine 1–alanine 19 is a signal peptide. Residues tyrosine 78, asparagine 123, alanine 124, glutamate 125, and asparagine 183 each coordinate substrate. The active-site Proton donor is glutamate 184. Residue tyrosine 247 participates in substrate binding. Residues cysteine 253 and cysteine 300 are joined by a disulfide bond. N-linked (GlcNAc...) asparagine glycosylation occurs at asparagine 272. The active-site Nucleophile is the glutamate 283. Tyrosine 349 provides a ligand contact to substrate. Residues asparagine 387, asparagine 433, asparagine 462, asparagine 516, asparagine 583, asparagine 599, asparagine 673, asparagine 716, asparagine 756, asparagine 860, and asparagine 870 are each glycosylated (N-linked (GlcNAc...) asparagine).

The protein belongs to the glycosyl hydrolase 35 family.

It localises to the secreted. The catalysed reaction is Hydrolysis of terminal non-reducing beta-D-galactose residues in beta-D-galactosides.. In terms of biological role, cleaves beta-linked terminal galactosyl residues from gangliosides, glycoproteins, and glycosaminoglycans. This Sclerotinia sclerotiorum (strain ATCC 18683 / 1980 / Ss-1) (White mold) protein is Probable beta-galactosidase C (lacC).